A 406-amino-acid chain; its full sequence is Phosphatidylinositol 5-phosphate 4-kinase type-2 alpha (406 aa).

Alanine 2 carries the N-acetylalanine modification. Residue threonine 3 is modified to Phosphothreonine. Residue serine 14 is modified to Phosphoserine. The PIPK domain maps to 33–405 (ASDPLLSVLM…RFLDFIGHIL (373 aa)). Positions 59-65 (VMLMPDD) are required for interaction with PIP5K1A. N6-acetyllysine is present on residues lysine 89 and lysine 145. A disordered region spans residues 288–329 (QEEVECEENDGEEEGESDGTHPVGTPPDSPGNTLNSSPPLAP). Acidic residues predominate over residues 289–304 (EEVECEENDGEEEGES).

As to quaternary structure, homodimer. Interacts with PIP4K2B; the interaction may regulate localization to the nucleus. Probably interacts with PIP5K1A; the interaction inhibits PIP5K1A kinase activity. Post-translationally, phosphorylated in tyrosines. Phosphorylation is induced by light and increases kinase activity. As to expression, expressed ubiquitously, with high levels in the brain. Present in most tissues, except notably skeletal muscle and small intestine.

It is found in the cell membrane. The protein resides in the nucleus. It localises to the lysosome. Its subcellular location is the cytoplasm. The protein localises to the photoreceptor inner segment. It is found in the cell projection. The protein resides in the cilium. It localises to the photoreceptor outer segment. It carries out the reaction a 1,2-diacyl-sn-glycero-3-phospho-(1D-myo-inositol-5-phosphate) + ATP = a 1,2-diacyl-sn-glycero-3-phospho-(1D-myo-inositol-4,5-bisphosphate) + ADP + H(+). It catalyses the reaction 1,2-dihexadecanoyl-sn-glycero-3-phospho-(1D-myo-inositol-5-phosphate) + ATP = 1,2-dihexadecanoyl-sn-glycero-3-phospho-(1D-myo-inositol-4,5-bisphosphate) + ADP + H(+). The catalysed reaction is 1,2-dihexadecanoyl-sn-glycero-3-phospho-(1D-myo-inositol-5-phosphate) + GTP = 1,2-dihexadecanoyl-sn-glycero-3-phospho-(1D-myo-inositol-4,5-bisphosphate) + GDP + H(+). In rod outer segments, activated by light. Inhibited by I-OMe tyrphostin AG-538 (I-OMe-AG-538), acting as an ATP-competitive inhibitor. Catalyzes the phosphorylation of phosphatidylinositol 5-phosphate (PtdIns5P) on the fourth hydroxyl of the myo-inositol ring, to form phosphatidylinositol 4,5-bisphosphate (PtdIns(4,5)P2). Has both ATP- and GTP-dependent kinase activities. May exert its function by regulating the levels of PtdIns5P, which functions in the cytosol by increasing AKT activity and in the nucleus signals through ING2. May regulate the pool of cytosolic PtdIns5P in response to the activation of tyrosine phosphorylation. Required for lysosome-peroxisome membrane contacts and intracellular cholesterol transport through modulating peroxisomal PtdIns(4,5)P2 level. In collaboration with PIP4K2B, has a role in mediating autophagy in times of nutrient stress. Required for autophagosome-lysosome fusion and the regulation of cellular lipid metabolism. May be involved in thrombopoiesis, and the terminal maturation of megakaryocytes and regulation of their size. Negatively regulates insulin signaling through a catalytic-independent mechanism. PIP4Ks interact with PIP5Ks and suppress PIP5K-mediated PtdIns(4,5)P2 synthesis and insulin-dependent conversion to PtdIns(3,4,5)P3. The polypeptide is Phosphatidylinositol 5-phosphate 4-kinase type-2 alpha (Homo sapiens (Human)).